The primary structure comprises 392 residues: Formate-dependent phosphoribosylglycinamide formyltransferase (392 aa).

Residues 22 to 23 and Glu-82 contribute to the N(1)-(5-phospho-beta-D-ribosyl)glycinamide site; that span reads EL. ATP is bound by residues Arg-114, Lys-155, 160-165, 195-198, and Glu-203; these read SSGKGQ and EGVV. An ATP-grasp domain is found at 119-308; it reads RLAAEELGLP…EFALHVRAFL (190 aa). Residues Glu-267 and Glu-279 each contribute to the Mg(2+) site. N(1)-(5-phospho-beta-D-ribosyl)glycinamide is bound by residues Asp-286, Lys-355, and 362–363; that span reads RR.

The protein belongs to the PurK/PurT family. In terms of assembly, homodimer.

It carries out the reaction N(1)-(5-phospho-beta-D-ribosyl)glycinamide + formate + ATP = N(2)-formyl-N(1)-(5-phospho-beta-D-ribosyl)glycinamide + ADP + phosphate + H(+). It participates in purine metabolism; IMP biosynthesis via de novo pathway; N(2)-formyl-N(1)-(5-phospho-D-ribosyl)glycinamide from N(1)-(5-phospho-D-ribosyl)glycinamide (formate route): step 1/1. Involved in the de novo purine biosynthesis. Catalyzes the transfer of formate to 5-phospho-ribosyl-glycinamide (GAR), producing 5-phospho-ribosyl-N-formylglycinamide (FGAR). Formate is provided by PurU via hydrolysis of 10-formyl-tetrahydrofolate. The sequence is that of Formate-dependent phosphoribosylglycinamide formyltransferase from Salmonella schwarzengrund (strain CVM19633).